A 390-amino-acid chain; its full sequence is Terminal nucleotidyltransferase 5C (390 aa).

It belongs to the TENT family.

It localises to the nucleus. The protein resides in the cytoplasm. It is found in the cytoskeleton. Its subcellular location is the microtubule organizing center. The protein localises to the centrosome. It carries out the reaction RNA(n) + ATP = RNA(n)-3'-adenine ribonucleotide + diphosphate. In terms of biological role, catalyzes the transfer of one adenosine molecule from an ATP to an mRNA poly(A) tail bearing a 3'-OH terminal group and enhances mRNA stability and gene expression. This chain is Terminal nucleotidyltransferase 5C, found in Gallus gallus (Chicken).